A 386-amino-acid chain; its full sequence is Succinate--CoA ligase [ADP-forming] subunit beta (386 aa).

The ATP-grasp domain maps to 9 to 244; sequence KELLKQFGVT…LDEEDPAEIE (236 aa). Residues Lys46, 53-55, Glu99, Ala102, and Glu107 contribute to the ATP site; that span reads GRG. Mg(2+) is bound by residues Asn199 and Asp213. Residues Asn264 and 321–323 each bind substrate; that span reads GIM.

The protein belongs to the succinate/malate CoA ligase beta subunit family. Heterotetramer of two alpha and two beta subunits. It depends on Mg(2+) as a cofactor.

It carries out the reaction succinate + ATP + CoA = succinyl-CoA + ADP + phosphate. The enzyme catalyses GTP + succinate + CoA = succinyl-CoA + GDP + phosphate. Its pathway is carbohydrate metabolism; tricarboxylic acid cycle; succinate from succinyl-CoA (ligase route): step 1/1. Its function is as follows. Succinyl-CoA synthetase functions in the citric acid cycle (TCA), coupling the hydrolysis of succinyl-CoA to the synthesis of either ATP or GTP and thus represents the only step of substrate-level phosphorylation in the TCA. The beta subunit provides nucleotide specificity of the enzyme and binds the substrate succinate, while the binding sites for coenzyme A and phosphate are found in the alpha subunit. The chain is Succinate--CoA ligase [ADP-forming] subunit beta from Bordetella pertussis (strain Tohama I / ATCC BAA-589 / NCTC 13251).